The following is a 126-amino-acid chain: MDKAAVVVRTRKVLTNRLLSRKQFVVEVVHPGKANVSKKDLKTTIAKLHKVADPETIFLFGFKTDFGGGKSTGFGLIYDNLEIAKKYEPKYRLARAGLYTKPQTSRKQRKEKKNRLKKAGKKTAKK.

The interval 98–126 is disordered; that stretch reads LYTKPQTSRKQRKEKKNRLKKAGKKTAKK. Basic residues predominate over residues 104–126; sequence TSRKQRKEKKNRLKKAGKKTAKK.

It belongs to the eukaryotic ribosomal protein eS24 family.

This chain is Small ribosomal subunit protein eS24 (rps24), found in Dictyostelium discoideum (Social amoeba).